The primary structure comprises 354 residues: Release factor glutamine methyltransferase (354 aa).

Residues glycine 174 to glycine 178, aspartate 197, and asparagine 241 contribute to the S-adenosyl-L-methionine site. Position 241 to 244 (asparagine 241 to tyrosine 244) interacts with substrate.

The protein belongs to the protein N5-glutamine methyltransferase family. PrmC subfamily.

It catalyses the reaction L-glutaminyl-[peptide chain release factor] + S-adenosyl-L-methionine = N(5)-methyl-L-glutaminyl-[peptide chain release factor] + S-adenosyl-L-homocysteine + H(+). In terms of biological role, methylates the class 1 translation termination release factors RF1/PrfA and RF2/PrfB on the glutamine residue of the universally conserved GGQ motif. The sequence is that of Release factor glutamine methyltransferase from Fusobacterium nucleatum subsp. nucleatum (strain ATCC 25586 / DSM 15643 / BCRC 10681 / CIP 101130 / JCM 8532 / KCTC 2640 / LMG 13131 / VPI 4355).